The chain runs to 580 residues: Protein O-linked-mannose beta-1,4-N-acetylglucosaminyltransferase 2 (580 aa).

Over 1–4 (MHLS) the chain is Cytoplasmic. Residues 5 to 25 (AVFNALLVSVLAAVLWKHVRL) traverse the membrane as a helical; Signal-anchor for type II membrane protein segment. At 26–580 (REHAATLEEE…PFADVLVCST (555 aa)) the chain is on the lumenal side. N-linked (GlcNAc...) asparagine glycosylation is found at N99 and N276. The region spanning 488-580 (ARCQASVQGA…PFADVLVCST (93 aa)) is the Fibronectin type-III domain.

Belongs to the glycosyltransferase 61 family. Mainly expressed in the central nervous system.

The protein resides in the endoplasmic reticulum membrane. The enzyme catalyses 3-O-(alpha-D-mannosyl)-L-threonyl-[protein] + UDP-N-acetyl-alpha-D-glucosamine = 3-O-(N-acetyl-beta-D-glucosaminyl-(1-&gt;4)-alpha-D-mannosyl)-L-threonyl-[protein] + UDP + H(+). The protein operates within protein modification; protein glycosylation. In terms of biological role, O-linked mannose beta-1,4-N-acetylglucosaminyltransferase that transfers UDP-N-acetyl-D-glucosamine to the 4-position of the mannose to generate N-acetyl-D-glucosamine-beta-1,4-O-D-mannosylprotein. Involved in the biosynthesis of the phosphorylated O-mannosyl trisaccharide (N-acetylgalactosamine-beta-3-N-acetylglucosamine-beta-4-(phosphate-6-)mannose), a carbohydrate structure present in alpha-dystroglycan (DAG1), which is required for binding laminin G-like domain-containing extracellular proteins with high affinity. The chain is Protein O-linked-mannose beta-1,4-N-acetylglucosaminyltransferase 2 (Pomgnt2) from Mus musculus (Mouse).